The primary structure comprises 74 residues: Kappa-stichotoxin-Hmg1a (74 aa).

A signal peptide spans 1-22 (MKSQMIAAVLLIAFCLCVVVTA). Positions 23–39 (RMELQDVEDMENGFQKR) are excised as a propeptide. The 33-residue stretch at 42 to 74 (CKDLIPVSECTDIRCRTSMKYRLNLCRKTCGSC) folds into the ShKT domain. 3 cysteine pairs are disulfide-bonded: Cys-42-Cys-74, Cys-51-Cys-67, and Cys-56-Cys-71.

The protein belongs to the sea anemone type 1 potassium channel toxin family. Type 1a subfamily.

The protein localises to the secreted. It localises to the nematocyst. Its function is as follows. Potently blocks the voltage-gated potassium channel Kv1.1/KCNA1 (Ki=75 pM), KcsA (Ki~1 nM) and moderately blocks Kv1.2/KCNA2 (Ki=2.5 nM) and Kv1.3/KCNA3 (Ki=3.1 nM). Also facilitates acetylcholine release at the avian neuromuscular junction. Blockade and dissociation rate are sensitive to voltage. This chain is Kappa-stichotoxin-Hmg1a, found in Heteractis magnifica (Magnificent sea anemone).